Consider the following 1883-residue polypeptide: AF4/FMR2 family member lilli (1883 aa).

The span at 1–45 shows a compositional bias: low complexity; that stretch reads MAQQQQQQHLQQQQQQHHQQQQLQQLQQQQQLPQYNNNLYNLNYN. Disordered regions lie at residues 1-88, 140-311, 329-381, 449-540, 609-654, 796-827, 844-901, 922-962, 992-1018, 1039-1075, 1115-1145, 1170-1238, 1358-1413, 1450-1510, 1543-1583, 1595-1641, and 1783-1803; these read MAQQ…SEGD, INST…EKDI, SIAA…SCTT, MPTP…HHQH, LGGG…HLSR, SISSGSASGSSSSDSAAGEVVPLPGPGETLQI, MQQK…KKHA, TAAA…LAKG, VAGSRKREHSSNSSSNGNTPTKKLHAA, TAAAGSSSDEDSTSSSCSSTKSSNSSSSGSDSEATAT, KNNRLYGAGSSSNSSSSETEEQQQQQQQHKQ, QHQQ…KSDK, YAAE…GART, EHGV…DQVS, ANGS…KATT, QTST…PPSD, and PSNSVGSQGSGSNTPPGRIVP. The segment covering 57–80 has biased composition (basic and acidic residues); the sequence is REKYERQQGIQSDDRETSLFEAPR. Low complexity-rich tracts occupy residues 140 to 154, 161 to 178, 223 to 253, and 362 to 381; these read INSTTTTSSSASLLP, QQQQQQQQQQQQHYQQQQ, SASSSSSASNNNSSSATNNATAAAATSASTA, and PLNSPPAASGASSSSLSCTT. Over residues 450 to 462 the composition is skewed to pro residues; it reads PTPPKASPTPPTA. A Phosphothreonine modification is found at threonine 458. Positions 466-479 are enriched in basic and acidic residues; it reads LKSEKNHSLEKQDS. Residues 481–491 are compositionally biased toward acidic residues; sequence LENDLELSESD. Serine 488 and serine 490 each carry phosphoserine. A compositionally biased stretch (low complexity) spans 500–540; that stretch reads SAGNSSNSSETDSSESGSEASSKGEAQQQQQQQQQLLHHQH. Residues 609–625 show a composition bias toward gly residues; sequence LGGGGGSGSTGGGGGSS. Low complexity-rich tracts occupy residues 626 to 639 and 796 to 813; these read SSGMGNMSSSSSSN and SISSGSASGSSSSDSAAG. Basic residues predominate over residues 867–877; sequence PRQKKPRKKKM. Phosphoserine is present on residues serine 887 and serine 888. The a.T hook DNA-binding region spans 930 to 942; it reads KKGRGRPRKQQQQ. Residues 939-962 are compositionally biased toward low complexity; sequence QQQQLQQTQSGNLSSASAGSLAKG. Phosphoserine occurs at positions 953 and 955. 5 stretches are compositionally biased toward low complexity: residues 1124–1145, 1170–1186, 1200–1222, 1362–1376, and 1385–1399; these read SSSNSSSSETEEQQQQQQQHKQ, QHQQQQPLQPQQQQQQQ, SSSSDGSSSSSTDSSSTNSSSSS, QQQQQQQHLHTQQLH, and HYQQQHQPHQQKAQQ. Residues 1450–1467 show a composition bias toward basic and acidic residues; the sequence is EHGVKPEPELDAGYEAKY. Residue serine 1546 is modified to Phosphoserine. Phosphothreonine is present on threonine 1548. 2 stretches are compositionally biased toward low complexity: residues 1558–1583 and 1595–1606; these read QQQQHQQQQQQQQHQPQHQQQLKATT and QTSTTATQQPTT. Over residues 1614–1625 the composition is skewed to pro residues; it reads TPPPVAPPPPPR. Low complexity predominate over residues 1783–1794; sequence PSNSVGSQGSGS.

It belongs to the AF4 family.

Its subcellular location is the nucleus. Its function is as follows. Has a role in transcriptional regulation. Acts in parallel with the Ras/MAPK and the PI3K/PKB pathways in the control of cell identity and cellular growth. Essential for regulation of the cytoskeleton and cell growth but not for cell proliferation or growth rate. Required specifically for the microtubule-based basal transport of lipid droplets. Plays a partially redundant function downstream of Raf in cell fate specification in the developing eye. Pair-rule protein that regulates embryonic cellularization, gastrulation and segmentation. This chain is AF4/FMR2 family member lilli, found in Drosophila grimshawi (Hawaiian fruit fly).